The chain runs to 401 residues: Argininosuccinate synthase (401 aa).

Residues 10 to 18 and Ala-38 each bind ATP; that span reads AYSGGVDTS. Tyr-89 is a binding site for L-citrulline. ATP is bound at residue Gly-119. Residues Thr-121, Asn-125, and Asp-126 each coordinate L-aspartate. Residue Asn-125 coordinates L-citrulline. L-citrulline is bound by residues Arg-129, Ser-177, Ser-186, Glu-262, and Tyr-274.

It belongs to the argininosuccinate synthase family. Type 1 subfamily. Homotetramer.

The protein localises to the cytoplasm. The catalysed reaction is L-citrulline + L-aspartate + ATP = 2-(N(omega)-L-arginino)succinate + AMP + diphosphate + H(+). It functions in the pathway amino-acid biosynthesis; L-arginine biosynthesis; L-arginine from L-ornithine and carbamoyl phosphate: step 2/3. The polypeptide is Argininosuccinate synthase (Prochlorococcus marinus (strain MIT 9313)).